The chain runs to 282 residues: Putative peroxisomal biogenesis factor 19 (282 aa).

Positions 73-95 (QEEAMKKAGADPSEGEGEQPLDP) are disordered. Cysteine methyl ester is present on cysteine 279. Cysteine 279 is lipidated: S-farnesyl cysteine. The propeptide at 280–282 (SIM) is removed in mature form.

It belongs to the peroxin-19 family.

The protein resides in the peroxisome. This chain is Putative peroxisomal biogenesis factor 19 (prx-19), found in Caenorhabditis elegans.